The sequence spans 189 residues: Peptide deformylase (189 aa).

Residues C93 and H135 each contribute to the Fe cation site. E136 is an active-site residue. H139 is a Fe cation binding site.

Belongs to the polypeptide deformylase family. It depends on Fe(2+) as a cofactor.

The enzyme catalyses N-terminal N-formyl-L-methionyl-[peptide] + H2O = N-terminal L-methionyl-[peptide] + formate. In terms of biological role, removes the formyl group from the N-terminal Met of newly synthesized proteins. Requires at least a dipeptide for an efficient rate of reaction. N-terminal L-methionine is a prerequisite for activity but the enzyme has broad specificity at other positions. The protein is Peptide deformylase of Karelsulcia muelleri (strain GWSS) (Sulcia muelleri).